The primary structure comprises 1792 residues: Brefeldin A-inhibited guanine nucleotide-exchange protein 2 (1792 aa).

Position 1 is an N-acetylmethionine (Met1). The segment at 2-224 is DCB; DCB:DCB domain and DCB:HUS domain interaction; that stretch reads QESQTKSMFV…KPQSPVIQAT (223 aa). The interval 207–294 is disordered; it reads ELEKPMQSKP…SRGTDSGAQE (88 aa). Phosphoserine is present on residues Ser214, Ser218, and Ser227. Positions 214-225 are enriched in polar residues; sequence SKPQSPVIQATA. Over residues 233-243 the composition is skewed to polar residues; that stretch reads LKQSQAQSKPT. Thr244 carries the post-translational modification Phosphothreonine. Phosphoserine is present on residues Ser355 and Ser356. The segment at 515-535 is HUS; DCB:HUS domain interaction; sequence ADAQCVVDIYVNYDCDLNAAN. Ser621 bears the Phosphoserine mark. Thr623 bears the Phosphothreonine mark. Ser624 is modified (phosphoserine). A Phosphothreonine modification is found at Thr633. An SEC7 domain is found at 661 to 792; the sequence is FNKKPKRGIQ…IIMLTTDLHS (132 aa). 8 positions are modified to phosphoserine: Ser707, Ser1518, Ser1520, Ser1521, Ser1532, Ser1535, Ser1541, and Ser1789.

Homodimer. Interacts with ARFGEF1/BIG1; both proteins are probably part of the same or very similar macromolecular complexes. Interacts with PRKAR1A, PRKAR2A, PRKAR1B, PRKAR2B, PPP1CC, PDE3A, TNFRSF1A, MYCBP and EXOC7. Interacts with GABRB1, GABRB2 and GABRB3. In vitro phosphorylated by PKA reducing its GEF activity and dephosphorylated by phosphatase PP1.

Its subcellular location is the cytoplasm. The protein resides in the membrane. It localises to the golgi apparatus. The protein localises to the perinuclear region. It is found in the trans-Golgi network. Its subcellular location is the endosome. The protein resides in the cytoskeleton. It localises to the microtubule organizing center. The protein localises to the centrosome. It is found in the cell projection. Its subcellular location is the dendrite. The protein resides in the cytoplasmic vesicle. It localises to the synapse. Inhibited by brefeldin A. In terms of biological role, promotes guanine-nucleotide exchange on ARF1 and ARF3 and to a lower extent on ARF5 and ARF6. Promotes the activation of ARF1/ARF5/ARF6 through replacement of GDP with GTP. Involved in the regulation of Golgi vesicular transport. Required for the integrity of the endosomal compartment. Involved in trafficking from the trans-Golgi network (TGN) to endosomes and is required for membrane association of the AP-1 complex and GGA1. Seems to be involved in recycling of the transferrin receptor from recycling endosomes to the plasma membrane. Probably is involved in the exit of GABA(A) receptors from the endoplasmic reticulum. Involved in constitutive release of tumor necrosis factor receptor 1 via exosome-like vesicles; the function seems to involve PKA and specifically PRKAR2B. Proposed to act as A kinase-anchoring protein (AKAP) and may mediate crosstalk between Arf and PKA pathways. This chain is Brefeldin A-inhibited guanine nucleotide-exchange protein 2 (Arfgef2), found in Mus musculus (Mouse).